The following is a 405-amino-acid chain: 8-amino-7-oxononanoate synthase 1 (405 aa).

Position 29 (Arg-29) interacts with substrate. Pyridoxal 5'-phosphate is bound at residue 116 to 117 (GY). His-141 contributes to the substrate binding site. Pyridoxal 5'-phosphate contacts are provided by Ser-187, His-215, and Thr-247. Lys-250 is subject to N6-(pyridoxal phosphate)lysine. Position 368 (Thr-368) interacts with substrate.

The protein belongs to the class-II pyridoxal-phosphate-dependent aminotransferase family. BioF subfamily. In terms of assembly, homodimer. Pyridoxal 5'-phosphate is required as a cofactor.

The enzyme catalyses 6-carboxyhexanoyl-[ACP] + L-alanine + H(+) = (8S)-8-amino-7-oxononanoate + holo-[ACP] + CO2. The protein operates within cofactor biosynthesis; biotin biosynthesis. Its function is as follows. Catalyzes the decarboxylative condensation of pimeloyl-[acyl-carrier protein] and L-alanine to produce 8-amino-7-oxononanoate (AON), [acyl-carrier protein], and carbon dioxide. The polypeptide is 8-amino-7-oxononanoate synthase 1 (Polaromonas sp. (strain JS666 / ATCC BAA-500)).